Consider the following 437-residue polypeptide: Elongation factor 1-gamma (437 aa).

Ala2 carries the N-acetylalanine modification. The GST N-terminal domain maps to 2–87; the sequence is AAGTLYTYPE…YVSNEELRGS (86 aa). The 129-residue stretch at 88-216 folds into the GST C-terminal domain; that stretch reads TPEAAAQVVQ…VKLCEKMAQF (129 aa). N6-acetyllysine is present on residues Lys147 and Lys212. A compositionally biased stretch (basic and acidic residues) spans 221-254; it reads FAETQPKKDTPRKEKGSREEKQKPQAERKEEKKA. The disordered stretch occupies residues 221–268; the sequence is FAETQPKKDTPRKEKGSREEKQKPQAERKEEKKAAAPAPEEEMDECEQ. Residue Lys253 forms a Glycyl lysine isopeptide (Lys-Gly) (interchain with G-Cter in SUMO1) linkage. The EF-1-gamma C-terminal domain maps to 276–437; that stretch reads AKDPFAHLPK…KAFNQGKIFK (162 aa). Lys285 is covalently cross-linked (Glycyl lysine isopeptide (Lys-Gly) (interchain with G-Cter in SUMO2)). Residue Lys401 is modified to N6-acetyllysine. The residue at position 434 (Lys434) is an N6-acetyllysine; alternate. Lys434 carries the N6-malonyllysine; alternate modification.

EF-1 is composed of four subunits: alpha, beta, delta, and gamma. As to expression, highly expressed in pancreatic tumor tissue and to a lesser extent in normal kidney, intestine, pancreas, stomach, lung, brain, spleen and liver.

Functionally, probably plays a role in anchoring the complex to other cellular components. In Homo sapiens (Human), this protein is Elongation factor 1-gamma (EEF1G).